The sequence spans 258 residues: Imidazole glycerol phosphate synthase subunit HisF (258 aa).

Catalysis depends on residues D11 and D130.

It belongs to the HisA/HisF family. In terms of assembly, heterodimer of HisH and HisF.

The protein resides in the cytoplasm. It carries out the reaction 5-[(5-phospho-1-deoxy-D-ribulos-1-ylimino)methylamino]-1-(5-phospho-beta-D-ribosyl)imidazole-4-carboxamide + L-glutamine = D-erythro-1-(imidazol-4-yl)glycerol 3-phosphate + 5-amino-1-(5-phospho-beta-D-ribosyl)imidazole-4-carboxamide + L-glutamate + H(+). It functions in the pathway amino-acid biosynthesis; L-histidine biosynthesis; L-histidine from 5-phospho-alpha-D-ribose 1-diphosphate: step 5/9. IGPS catalyzes the conversion of PRFAR and glutamine to IGP, AICAR and glutamate. The HisF subunit catalyzes the cyclization activity that produces IGP and AICAR from PRFAR using the ammonia provided by the HisH subunit. This is Imidazole glycerol phosphate synthase subunit HisF from Methylorubrum extorquens (strain PA1) (Methylobacterium extorquens).